A 279-amino-acid polypeptide reads, in one-letter code: Acetylglutamate kinase (279 aa).

Residues 62–63 (GG), Arg-84, and Asn-177 each bind substrate.

This sequence belongs to the acetylglutamate kinase family. ArgB subfamily.

Its subcellular location is the cytoplasm. The catalysed reaction is N-acetyl-L-glutamate + ATP = N-acetyl-L-glutamyl 5-phosphate + ADP. The protein operates within amino-acid biosynthesis; L-arginine biosynthesis; N(2)-acetyl-L-ornithine from L-glutamate: step 2/4. In terms of biological role, catalyzes the ATP-dependent phosphorylation of N-acetyl-L-glutamate. The sequence is that of Acetylglutamate kinase from Pseudothermotoga lettingae (strain ATCC BAA-301 / DSM 14385 / NBRC 107922 / TMO) (Thermotoga lettingae).